We begin with the raw amino-acid sequence, 196 residues long: Peptidyl-tRNA hydrolase (196 aa).

Tyr-14 serves as a coordination point for tRNA. The active-site Proton acceptor is His-19. TRNA contacts are provided by Tyr-64, Asn-66, and Asn-112.

This sequence belongs to the PTH family. Monomer.

Its subcellular location is the cytoplasm. The catalysed reaction is an N-acyl-L-alpha-aminoacyl-tRNA + H2O = an N-acyl-L-amino acid + a tRNA + H(+). In terms of biological role, hydrolyzes ribosome-free peptidyl-tRNAs (with 1 or more amino acids incorporated), which drop off the ribosome during protein synthesis, or as a result of ribosome stalling. Catalyzes the release of premature peptidyl moieties from peptidyl-tRNA molecules trapped in stalled 50S ribosomal subunits, and thus maintains levels of free tRNAs and 50S ribosomes. This chain is Peptidyl-tRNA hydrolase, found in Methylocella silvestris (strain DSM 15510 / CIP 108128 / LMG 27833 / NCIMB 13906 / BL2).